The sequence spans 533 residues: Atypical kinase COQ8B, mitochondrial (533 aa).

The chain crosses the membrane as a helical span at residues 93-109 (LASFGGLAVGLGLGALA). The KxGQ motif motif lies at 156–159 (KIGQ). One can recognise a Protein kinase domain in the interval 192–424 (MMRVLEEELG…DRVLQKSQDL (233 aa)). Positions 217–220 (AAAS) match the AAAS motif motif. ATP contacts are provided by residues Ser220, Lys238, and 325–328 (MELA). Asp368 serves as the catalytic Proton acceptor. ATP-binding residues include Asn373 and Asp387.

It belongs to the protein kinase superfamily. ADCK protein kinase family. As to quaternary structure, homodimer; homodimerizes via its transmembrane region. Interacts with COQ6 and COQ7. Interacts with the multi-subunit COQ enzyme complex, composed of at least COQ3, COQ4, COQ5, COQ6, COQ7 and COQ9.

The protein resides in the mitochondrion membrane. It is found in the cytoplasm. Its subcellular location is the cytosol. It localises to the cell membrane. Its pathway is cofactor biosynthesis; ubiquinone biosynthesis. Functionally, atypical kinase involved in the biosynthesis of coenzyme Q, also named ubiquinone, an essential lipid-soluble electron transporter for aerobic cellular respiration. Its substrate specificity is still unclear: may act as a protein kinase that mediates phosphorylation of COQ3. According to other reports, acts as a small molecule kinase, possibly a lipid kinase that phosphorylates a prenyl lipid in the ubiquinone biosynthesis pathway, as suggested by its ability to bind coenzyme Q lipid intermediates. However, the small molecule kinase activity was not confirmed by another publication. Required for podocyte migration. The polypeptide is Atypical kinase COQ8B, mitochondrial (Mus musculus (Mouse)).